The primary structure comprises 605 residues: Vicilin GC72-A (605 aa).

The N-terminal stretch at 1-23 is a signal peptide; that stretch reads MVRNKSVFVVLLFSLFLSFGLLC. Disordered regions lie at residues 52–81 and 157–181; these read TRGQTEQDKCEDRSETQLKEEQQRDGEDPQ and GERENKWREEEEEESDEGEQQQRNN. Residues 166 to 175 are compositionally biased toward acidic residues; that stretch reads EEEEESDEGE. Cupin type-1 domains are found at residues 183–341 and 387–564; these read YYFH…EQLD and FNLL…RLVD. Residues 465 to 485 form a disordered region; the sequence is SSDWSSREEEEQEEQEVERRS.

The protein belongs to the 7S seed storage protein family.

The protein resides in the vacuole. It localises to the aleurone grain. Seed storage protein. The sequence is that of Vicilin GC72-A from Gossypium hirsutum (Upland cotton).